A 198-amino-acid polypeptide reads, in one-letter code: Nucleoid occlusion factor SlmA (198 aa).

Residues 9 to 70 (RNRREEILQA…SLIEFIEDSL (62 aa)) enclose the HTH tetR-type domain. The segment at residues 33 to 52 (TTAKLAANVGVSEAALYRHF) is a DNA-binding region (H-T-H motif). A coiled-coil region spans residues 119-144 (DRLQGRINQLYERIEVQLRQVLRERK).

It belongs to the nucleoid occlusion factor SlmA family. Homodimer. Interacts with FtsZ.

It localises to the cytoplasm. It is found in the nucleoid. Functionally, required for nucleoid occlusion (NO) phenomenon, which prevents Z-ring formation and cell division over the nucleoid. Acts as a DNA-associated cell division inhibitor that binds simultaneously chromosomal DNA and FtsZ, and disrupts the assembly of FtsZ polymers. SlmA-DNA-binding sequences (SBS) are dispersed on non-Ter regions of the chromosome, preventing FtsZ polymerization at these regions. The chain is Nucleoid occlusion factor SlmA from Sodalis glossinidius (strain morsitans).